The following is a 267-amino-acid chain: MPRAFLVKKPCVSTCKRNWSELPDEERGEIYVPVSLGFCPPQPYREPEASVAEPPSCPLALDMSLRDSSYSVAPGPCVVAQLPSEDVSHLTDPQSRDQGFLRTKMKVTLGDSPNGDLFTCHICQKSFTHQRMLNRHMKCHNDVKRHLCTYCGKGFNDTFDLKRHVRTHTGVRPYKCSLCDKAFTQRCSLESHLKKIHGVQQKYAYKERRAKLYVCEECGCTSESQEGHVLHLKERHPDSPLLRKTSKKVAVALQNTVTSLLQGSPHL.

4 C2H2-type zinc fingers span residues 118–140 (FTCH…MKCH), 146–168 (HLCT…VRTH), 174–197 (YKCS…KKIH), and 213–236 (YVCE…KERH).

In terms of tissue distribution, expressed in skin, testis, kidney and weakly in lung. Not detected in heart, brain, spleen, liver and skeletal muscle.

It is found in the nucleus. Functionally, putative transcription factor. Involved in hair formation and spermatogenesis. May function in the differentiation and/or maintenance of the urogenital system. The chain is Putative transcription factor Ovo-like 1 (Ovol1) from Mus musculus (Mouse).